The primary structure comprises 38 residues: Trypsin inhibitor 2 (38 aa).

Glutamine 1 carries the post-translational modification Pyrrolidone carboxylic acid.

In terms of processing, contains disulfide bonds.

In terms of biological role, inhibits trypsin-like proteases from the guts of the insect pests P.truncatus, P.americana, Acheta sp and Gryllus sp. In Opuntia streptacantha (Prickly pear cactus), this protein is Trypsin inhibitor 2.